The primary structure comprises 456 residues: MADDSATPGVRVPSHRYGRHYHRRKIKEAVDSISSLPDVILQHILSFIPTKLAITTSLLSKRWRHVWCDTPSLSFNDYRLEAPFIDETLTRYTASKMMRFHLHTSLINNVPHLESWIKFAMSRNVDHLSLDLWNQVANKFKFPDFFHINSSLKQLTVVLDFSDTMIAICLKKLYLSTCLLSDESMANILFGCPILESLTLDHCGGLRVLDLSKSLRLRTLEINCNIWVPELTAMQIVAPHTHCLRLRNSKLPCSLVDVSSLKEAKLNICIDSFSKTIKADFLQVTLLKMLEKLHNVEKLTLGGNFLQILSVAELRGVPFPMFKVKDLTLETVIFQYVIPGIERVLQNSPDLKKLTLLTKDFYHKPGEYLGDHMDLEGFNLDQCWKSKYGVFWNKSCLDVESEHVVSFVELMLKNTKALDKMVVLLEDHYVRFKEMVPRLSHNYNISIALYTFKPQS.

Residues 30 to 78 form the F-box domain; the sequence is VDSISSLPDVILQHILSFIPTKLAITTSLLSKRWRHVWCDTPSLSFNDY. 6 LRR repeats span residues 177–202, 203–213, 228–253, 278–303, 333–358, and 396–422; these read TCLLSDESMANILFGCPILESLTLDH, CGGLRVLDLSK, VPELTAMQIVAPHTHCLRLRNSKLPC, KADFLQVTLLKMLEKLHNVEKLTLGG, IFQYVIPGIERVLQNSPDLKKLTLLT, and CLDVESEHVVSFVELMLKNTKALDKMV.

In Arabidopsis thaliana (Mouse-ear cress), this protein is Putative F-box/LRR-repeat protein At3g18150.